Here is a 376-residue protein sequence, read N- to C-terminus: Erythronate-4-phosphate dehydrogenase (376 aa).

Ser-45 and Thr-67 together coordinate substrate. Asp-147 provides a ligand contact to NAD(+). Arg-209 is an active-site residue. NAD(+) is bound at residue Asp-233. Glu-238 is an active-site residue. The Proton donor role is filled by His-255. Gly-258 is an NAD(+) binding site. Tyr-259 contacts substrate.

The protein belongs to the D-isomer specific 2-hydroxyacid dehydrogenase family. PdxB subfamily. Homodimer.

It is found in the cytoplasm. The enzyme catalyses 4-phospho-D-erythronate + NAD(+) = (R)-3-hydroxy-2-oxo-4-phosphooxybutanoate + NADH + H(+). The protein operates within cofactor biosynthesis; pyridoxine 5'-phosphate biosynthesis; pyridoxine 5'-phosphate from D-erythrose 4-phosphate: step 2/5. Functionally, catalyzes the oxidation of erythronate-4-phosphate to 3-hydroxy-2-oxo-4-phosphonooxybutanoate. In Shewanella baltica (strain OS223), this protein is Erythronate-4-phosphate dehydrogenase.